The chain runs to 297 residues: Protoheme IX farnesyltransferase (297 aa).

The next 9 membrane-spanning stretches (helical) occupy residues 23–43 (VTQL…PGMP), 49–69 (VFGT…NCLI), 93–113 (IQVL…LYHL), 117–137 (LTMW…TVIL), 144–164 (NIVI…AAVA), 171–191 (AWVL…ALAL), 215–235 (RLHI…PYAI), 238–258 (SGAL…WYAW), and 275–295 (FSIL…WVGL).

This sequence belongs to the UbiA prenyltransferase family. Protoheme IX farnesyltransferase subfamily.

Its subcellular location is the cell inner membrane. The catalysed reaction is heme b + (2E,6E)-farnesyl diphosphate + H2O = Fe(II)-heme o + diphosphate. It participates in porphyrin-containing compound metabolism; heme O biosynthesis; heme O from protoheme: step 1/1. In terms of biological role, converts heme B (protoheme IX) to heme O by substitution of the vinyl group on carbon 2 of heme B porphyrin ring with a hydroxyethyl farnesyl side group. The sequence is that of Protoheme IX farnesyltransferase from Bordetella bronchiseptica (strain ATCC BAA-588 / NCTC 13252 / RB50) (Alcaligenes bronchisepticus).